The chain runs to 241 residues: Chloride intracellular channel protein 1 (241 aa).

Ala-2 bears the N-acetylalanine mark. Residues Ala-2–Pro-90 are required for insertion into the membrane. An N6-acetyllysine modification is found at Lys-13. Positions Cys-24–Ser-27 match the G-site motif. A disulfide bridge connects residues Cys-24 and Cys-59. The chain crosses the membrane as a helical span at residues Phe-26–Val-46. The GST C-terminal domain maps to Tyr-93 to Tyr-233. Lys-119 is subject to N6-acetyllysine. At Ser-121 the chain carries Phosphoserine. Lys-131 is modified (N6-acetyllysine). Ser-156 and Ser-211 each carry phosphoserine. Tyr-233 carries the post-translational modification Phosphotyrosine.

Belongs to the chloride channel CLIC family. In terms of assembly, monomer. Homodimer (in vitro). Interacts with TRAPPC2. Dimerization requires a conformation change that leads to the exposure of a large hydrophobic surface. In vivo, this may lead to membrane insertion.

The protein resides in the nucleus. The protein localises to the nucleus membrane. Its subcellular location is the cytoplasm. It is found in the cell membrane. It localises to the endoplasmic reticulum. The enzyme catalyses L-dehydroascorbate + 2 glutathione = glutathione disulfide + L-ascorbate. It carries out the reaction chloride(in) = chloride(out). It catalyses the reaction iodide(out) = iodide(in). The catalysed reaction is thiocyanate(in) = thiocyanate(out). The enzyme catalyses nitrate(in) = nitrate(out). It carries out the reaction bromide(in) = bromide(out). It catalyses the reaction fluoride(in) = fluoride(out). In the soluble state, catalyzes glutaredoxin-like thiol disulfide exchange reactions with reduced glutathione as electron donor. Reduces selenite and dehydroascorbate and may act as an antioxidant during oxidative stress response. Can insert into membranes and form voltage-dependent multi-ion conductive channels. Membrane insertion seems to be redox-regulated and may occur only under oxidizing conditions. Involved in regulation of the cell cycle. The chain is Chloride intracellular channel protein 1 (CLIC1) from Oryctolagus cuniculus (Rabbit).